A 456-amino-acid chain; its full sequence is Keratin, type I cytoskeletal 12 (456 aa).

A compositionally biased stretch (polar residues) spans 1–19 (MSLSVRTSALSRRSSSQNG). Residues 1–25 (MSLSVRTSALSRRSSSQNGVAGRPW) are disordered. Residues 1 to 114 (MSLSVRTSAL…GNDGGLLSGS (114 aa)) are head. The segment at 115–150 (EKETMQNLNDRLASYLGKVRALEEANAELENKIREW) is coil 1A. The 288-residue stretch at 115-402 (EKETMQNLND…RLLEGDTQGD (288 aa)) folds into the IF rod domain. Positions 154–171 (RRTGDSGSQSDYSKYYPL) are linker 1. The tract at residues 172–263 (IEDLKNKIIS…KNHEEELQSF (92 aa)) is coil 1B. The tract at residues 264–286 (QAGGPGEVNVEMDAAPGVDLTKS) is linker 12. The interval 287 to 397 (GELRKEINSN…IETYRRLLEG (111 aa)) is coil 2. The segment at 398 to 456 (DTQGDGFDESLSLTVSKPQAPSVDSSKDPNKTRKIKTVVQEIVNGEVVSSQVQELEEAM) is tail. A disordered region spans residues 405–430 (DESLSLTVSKPQAPSVDSSKDPNKTR). A compositionally biased stretch (polar residues) spans 408–421 (LSLTVSKPQAPSVD).

The protein belongs to the intermediate filament family. As to quaternary structure, heterotetramer of two type I and two type II keratins. Keratin-3 associates with keratin-12.

Involved in corneal epithelium organization, integrity and corneal keratin expression. This is Keratin, type I cytoskeletal 12 from Rattus norvegicus (Rat).